The sequence spans 346 residues: Dimethylallyltranstransferase (346 aa).

The isopentenyl diphosphate site is built by lysine 96, arginine 99, and histidine 128. Residues aspartate 135 and aspartate 141 each coordinate Mg(2+). Arginine 147 is an isopentenyl diphosphate binding site.

The protein belongs to the FPP/GGPP synthase family. Mg(2+) serves as cofactor.

The catalysed reaction is isopentenyl diphosphate + dimethylallyl diphosphate = (2E)-geranyl diphosphate + diphosphate. It participates in isoprenoid biosynthesis; geranyl diphosphate biosynthesis; geranyl diphosphate from dimethylallyl diphosphate and isopentenyl diphosphate: step 1/1. Its function is as follows. Prenyltransferase involved in the biosynthesis of ambiguines, a family of hapalindole-type alkaloids. Catalyzes the addition of isopentenyl diphosphate (IPP) onto dimethylallyl diphosphate (DMAPP) to form geranyl pyrophosphate (GPP). Cannot use farnesyl diphosphate (FPP) or geranylgeranyl diphosphate (GGPP). The protein is Dimethylallyltranstransferase of Fischerella ambigua (strain UTEX 1903).